A 268-amino-acid chain; its full sequence is ClpXP adapter protein SpxH (268 aa).

The protein belongs to the SpxH family. In terms of assembly, interacts with Spx.

The protein localises to the cytoplasm. Adapter protein required for efficient degradation of Spx by ClpXP under non-stress conditions. Interaction with Spx stabilizes Spx and exposes the C-terminus of Spx for recognition and proteolysis by ClpXP. In Staphylococcus aureus (strain COL), this protein is ClpXP adapter protein SpxH.